The sequence spans 25 residues: M-poneritoxin-Na1b (25 aa).

This sequence belongs to the non-disulfide-bridged peptide (NDBP) superfamily. Medium-length antimicrobial peptide (group 3) family. Ponericin-W subfamily. As to expression, expressed by the venom gland.

Its subcellular location is the secreted. The protein localises to the target cell membrane. In terms of biological role, membrane-perturbating peptide with multiple activities. It is insecticidal, since it induces reversible paralysis in insects (L.cuprina) after 1 hour, but fails to kill flies. It shows a relatively strong and broad-spectrum antibacterial activity against both Gram-positive and Gram-negative bacteria (MIC&lt;20 uM). It is also anthelmintic, since it potently inhibits the larval development of the major pathogenic nematode of ruminants (H.contortus, IC(50)=2.8 uM). Interestingly, only at 10 uM, it increases adult males motility of the other nematode B.malayi for 24 hours post-treatment, followed by a reduction in motility for the rest of the experiment. It shows cytotoxic activity against HEK293 cells (EC(50)=4-6 uM) and induces hemolysis in human erythrocytes (EC(50)=40-62 uM). In addition, it causes an important increase in intracellular calcium concentration on neuronal and epithelial cell lines, which supports a non-specific membrane perturbation mechanism of action. In vivo, it induces pain by intraplantar injection into mice, suggesting a defensive function against vertebrate predators. The polypeptide is M-poneritoxin-Na1b (Neoponera apicalis (Ant)).